A 940-amino-acid polypeptide reads, in one-letter code: Mating-type protein A-alpha Z4 (940 aa).

The homeobox; TALE-type DNA-binding region spans 110–182; the sequence is GAELSATPLP…AARARMGWGD (73 aa). Disordered stretches follow at residues 333–618, 633–762, 832–863, and 877–912; these read KQRQ…TGDP, PRDL…GLRP, GQKA…SSLV, and EAPK…DTVR. Basic and acidic residues predominate over residues 337 to 360; it reads ARREQRRAQKDRMDAQRRAEDRKC. 2 stretches are compositionally biased toward acidic residues: residues 376–400 and 427–469; these read ESDE…DGED and ATED…EEEE. 3 stretches are compositionally biased toward low complexity: residues 516–531, 582–611, and 657–693; these read PSSR…SPSP, VRSR…PSGG, and SRSL…SDAT. A compositionally biased stretch (acidic residues) spans 694-703; sequence DITEPDEATT. Residues 704 to 724 show a composition bias toward low complexity; that stretch reads ADETTTQSTSASSSRDTTSQQ. Residues 877–896 are compositionally biased toward basic and acidic residues; the sequence is EAPKPAKAPKNDRRYLERRE.

The protein belongs to the TALE/M-ATYP homeobox family.

Its subcellular location is the nucleus. Its function is as follows. Specifies A-alpha-4 mating-type. May regulate the expression of genes specific to the homokaryotic cell type. In Schizophyllum commune (Split gill fungus), this protein is Mating-type protein A-alpha Z4.